Reading from the N-terminus, the 484-residue chain is Arginyl-tRNA--protein transferase 1 (484 aa).

It belongs to the R-transferase family.

It carries out the reaction an N-terminal L-alpha-aminoacyl-[protein] + L-arginyl-tRNA(Arg) = an N-terminal L-arginyl-L-aminoacyl-[protein] + tRNA(Arg) + H(+). In terms of biological role, involved in the post-translational conjugation of arginine to the N-terminal aspartate or glutamate of a protein. This arginylation is required for degradation of the protein via the ubiquitin pathway. Does not arginylate cysteine residues. This chain is Arginyl-tRNA--protein transferase 1 (Ate1), found in Drosophila melanogaster (Fruit fly).